A 467-amino-acid polypeptide reads, in one-letter code: tRNA(Ile)-lysidine synthase (467 aa).

Serine 35–serine 40 provides a ligand contact to ATP.

The protein belongs to the tRNA(Ile)-lysidine synthase family.

The protein localises to the cytoplasm. It carries out the reaction cytidine(34) in tRNA(Ile2) + L-lysine + ATP = lysidine(34) in tRNA(Ile2) + AMP + diphosphate + H(+). In terms of biological role, ligates lysine onto the cytidine present at position 34 of the AUA codon-specific tRNA(Ile) that contains the anticodon CAU, in an ATP-dependent manner. Cytidine is converted to lysidine, thus changing the amino acid specificity of the tRNA from methionine to isoleucine. The chain is tRNA(Ile)-lysidine synthase from Caldanaerobacter subterraneus subsp. tengcongensis (strain DSM 15242 / JCM 11007 / NBRC 100824 / MB4) (Thermoanaerobacter tengcongensis).